The primary structure comprises 151 residues: Glycine and methionine-rich protein (151 aa).

A signal peptide spans 1-19; that stretch reads MKTAVVLAAFSALMALARA.

Component of the acid-insoluble and acid-soluble organic matrix of calcified layers of the shell (at protein level).

It localises to the secreted. The polypeptide is Glycine and methionine-rich protein (Lottia gigantea (Giant owl limpet)).